The primary structure comprises 316 residues: Glutamyl-Q tRNA(Asp) synthetase (316 aa).

L-glutamate is bound by residues 13–17 and D49; that span reads RFAPS. Positions 16–26 match the 'HIGH' region motif; the sequence is PSPSGDLHFGS. C105, C107, Y119, and C123 together coordinate Zn(2+). Positions 176 and 194 each coordinate L-glutamate. The 'KMSKS' region motif lies at 232-236; the sequence is KLSKQ. K235 serves as a coordination point for ATP.

It belongs to the class-I aminoacyl-tRNA synthetase family. GluQ subfamily. Requires Zn(2+) as cofactor.

Catalyzes the tRNA-independent activation of glutamate in presence of ATP and the subsequent transfer of glutamate onto a tRNA(Asp). Glutamate is transferred on the 2-amino-5-(4,5-dihydroxy-2-cyclopenten-1-yl) moiety of the queuosine in the wobble position of the QUC anticodon. The chain is Glutamyl-Q tRNA(Asp) synthetase from Photorhabdus laumondii subsp. laumondii (strain DSM 15139 / CIP 105565 / TT01) (Photorhabdus luminescens subsp. laumondii).